A 206-amino-acid chain; its full sequence is Orotate phosphoribosyltransferase (206 aa).

Residues K26, 72-73 (YK), R99, K100, K103, H105, and 124-132 (DDVMTSGFS) contribute to the 5-phospho-alpha-D-ribose 1-diphosphate site. Positions 128 and 157 each coordinate orotate.

This sequence belongs to the purine/pyrimidine phosphoribosyltransferase family. PyrE subfamily. In terms of assembly, homodimer. Mg(2+) is required as a cofactor.

It carries out the reaction orotidine 5'-phosphate + diphosphate = orotate + 5-phospho-alpha-D-ribose 1-diphosphate. It participates in pyrimidine metabolism; UMP biosynthesis via de novo pathway; UMP from orotate: step 1/2. Functionally, catalyzes the transfer of a ribosyl phosphate group from 5-phosphoribose 1-diphosphate to orotate, leading to the formation of orotidine monophosphate (OMP). This Buchnera aphidicola subsp. Baizongia pistaciae (strain Bp) protein is Orotate phosphoribosyltransferase.